We begin with the raw amino-acid sequence, 172 residues long: NADH-ubiquinone oxidoreductase chain 6 (172 aa).

The next 5 membrane-spanning stretches (helical) occupy residues 1–21 (MTYF…AVAS), 27–47 (YGVV…LSLG), 48–68 (VSFV…VVFV), 87–107 (VVGY…VGGF), and 138–158 (CGVG…FVVL).

The protein belongs to the complex I subunit 6 family.

Its subcellular location is the mitochondrion membrane. It carries out the reaction a ubiquinone + NADH + 5 H(+)(in) = a ubiquinol + NAD(+) + 4 H(+)(out). Core subunit of the mitochondrial membrane respiratory chain NADH dehydrogenase (Complex I) that is believed to belong to the minimal assembly required for catalysis. Complex I functions in the transfer of electrons from NADH to the respiratory chain. The immediate electron acceptor for the enzyme is believed to be ubiquinone. The chain is NADH-ubiquinone oxidoreductase chain 6 (MT-ND6) from Uria lomvia (Thick-billed murre).